The sequence spans 406 residues: uncharacterized protein (406 aa).

Gly-2 carries the N-myristoyl glycine; by host lipid modification. The interval 291–406 (QLESTTEVKP…FQYNKPTYDI (116 aa)) is disordered. Over residues 296-310 (TEVKPESTTEVKPES) the composition is skewed to basic and acidic residues. Polar residues predominate over residues 311–323 (TSEVQPESTTEFQ). 3 stretches are compositionally biased toward low complexity: residues 324–333 (PESTTVVEPE), 341–351 (ESTTEFQPEST), and 359–369 (TTEPQVESTTE). Over residues 370–406 (FQPESSTEPQVESTVEVQAESMNESSYFQYNKPTYDI) the composition is skewed to polar residues.

This is an uncharacterized protein from Acanthamoeba polyphaga (Amoeba).